A 276-amino-acid chain; its full sequence is tRNA dimethylallyltransferase (276 aa).

The interval 9–12 is interaction with substrate tRNA; that stretch reads DSLS.

The protein belongs to the IPP transferase family. As to quaternary structure, monomer. Mg(2+) serves as cofactor.

The enzyme catalyses adenosine(37) in tRNA + dimethylallyl diphosphate = N(6)-dimethylallyladenosine(37) in tRNA + diphosphate. Its function is as follows. Catalyzes the transfer of a dimethylallyl group onto the adenine at position 37 in tRNAs that read codons beginning with uridine, leading to the formation of N6-(dimethylallyl)adenosine (i(6)A). In Helicobacter pylori (strain Shi470), this protein is tRNA dimethylallyltransferase (miaA).